The sequence spans 239 residues: 2-C-methyl-D-erythritol 4-phosphate cytidylyltransferase (239 aa).

This sequence belongs to the IspD/TarI cytidylyltransferase family. IspD subfamily.

The catalysed reaction is 2-C-methyl-D-erythritol 4-phosphate + CTP + H(+) = 4-CDP-2-C-methyl-D-erythritol + diphosphate. It functions in the pathway isoprenoid biosynthesis; isopentenyl diphosphate biosynthesis via DXP pathway; isopentenyl diphosphate from 1-deoxy-D-xylulose 5-phosphate: step 2/6. Catalyzes the formation of 4-diphosphocytidyl-2-C-methyl-D-erythritol from CTP and 2-C-methyl-D-erythritol 4-phosphate (MEP). The sequence is that of 2-C-methyl-D-erythritol 4-phosphate cytidylyltransferase from Acidobacterium capsulatum (strain ATCC 51196 / DSM 11244 / BCRC 80197 / JCM 7670 / NBRC 15755 / NCIMB 13165 / 161).